Reading from the N-terminus, the 128-residue chain is uncharacterized protein (128 aa).

2 helical membrane-spanning segments follow: residues 45–65 and 95–115; these read GYFHWSLITQNYIIFLFLFPF and FMSHIPVLTVISYCVCCLSCF.

It is found in the membrane. This is an uncharacterized protein from Saccharomyces cerevisiae (strain ATCC 204508 / S288c) (Baker's yeast).